The chain runs to 293 residues: Protease HtpX homolog (293 aa).

The next 2 helical transmembrane spans lie at 7–26 and 30–49; these read ASLL…ALLG and GMVM…WYYS. A Zn(2+)-binding site is contributed by His-131. The active site involves Glu-132. A Zn(2+)-binding site is contributed by His-135. Helical transmembrane passes span 148-168 and 180-200; these read ATLA…FWFF and IGAL…QLGI. A Zn(2+)-binding site is contributed by Glu-205.

The protein belongs to the peptidase M48B family. Zn(2+) serves as cofactor.

It localises to the cell inner membrane. This chain is Protease HtpX homolog, found in Acaryochloris marina (strain MBIC 11017).